The chain runs to 802 residues: Vacuolar membrane protease (802 aa).

Residues Met1–Pro13 are Cytoplasmic-facing. Residues Val14 to Leu34 form a helical membrane-spanning segment. Topologically, residues Thr35–Thr357 are vacuolar. Residues Asn48, Asn102, Asn105, and Asn112 are each glycosylated (N-linked (GlcNAc...) asparagine). Zn(2+)-binding residues include His152 and Asp164. The active-site Proton acceptor is Glu198. 3 residues coordinate Zn(2+): Glu199, Glu224, and His297. A helical transmembrane segment spans residues Phe358–Trp378. Topologically, residues Ser379–Phe389 are cytoplasmic. Residues Ala390–Trp409 form a helical membrane-spanning segment. The Vacuolar segment spans residues Arg410–Thr423. The helical transmembrane segment at Ser424 to Leu444 threads the bilayer. Topologically, residues His445 to Arg457 are cytoplasmic. A helical transmembrane segment spans residues Met458–Leu478. Residues Ala479–Ser490 lie on the Vacuolar side of the membrane. Residues Leu491–Ala511 traverse the membrane as a helical segment. Topologically, residues Pro512–Ser609 are cytoplasmic. Disordered stretches follow at residues Gly528–Thr554 and Ala570–Trp603. Residues Trp610–Ile630 form a helical membrane-spanning segment. The Vacuolar portion of the chain corresponds to Ala631–Leu649. A helical transmembrane segment spans residues Tyr650–Ile670. Topologically, residues His671–Val677 are cytoplasmic. Residues Pro678 to Phe698 traverse the membrane as a helical segment. Topologically, residues Ser699–Arg802 are vacuolar. 2 N-linked (GlcNAc...) asparagine glycosylation sites follow: Asn746 and Asn779.

The protein belongs to the peptidase M28 family. It depends on Zn(2+) as a cofactor.

The protein localises to the vacuole membrane. In terms of biological role, may be involved in vacuolar sorting and osmoregulation. This chain is Vacuolar membrane protease, found in Leptosphaeria maculans (strain JN3 / isolate v23.1.3 / race Av1-4-5-6-7-8) (Blackleg fungus).